The following is a 125-amino-acid chain: Small ribosomal subunit protein uS13 (125 aa).

The tract at residues 93–125 is disordered; the sequence is RKGLPVRGQRTKTNARTRKGPKRTVAGKKKAGR.

It belongs to the universal ribosomal protein uS13 family. As to quaternary structure, part of the 30S ribosomal subunit. Forms a loose heterodimer with protein S19. Forms two bridges to the 50S subunit in the 70S ribosome.

Its function is as follows. Located at the top of the head of the 30S subunit, it contacts several helices of the 16S rRNA. In the 70S ribosome it contacts the 23S rRNA (bridge B1a) and protein L5 of the 50S subunit (bridge B1b), connecting the 2 subunits; these bridges are implicated in subunit movement. Contacts the tRNAs in the A and P-sites. The protein is Small ribosomal subunit protein uS13 of Paenarthrobacter aurescens (strain TC1).